The primary structure comprises 309 residues: Taste receptor type 2 member 20 (309 aa).

The Extracellular portion of the chain corresponds to 1–6; that stretch reads MMSFLH. A helical membrane pass occupies residues 7-27; it reads IVFSILVVVAFILGNFANGFI. Residues 28–46 lie on the Cytoplasmic side of the membrane; it reads ALINFIAWVKRQKISSADQ. A helical transmembrane segment spans residues 47-67; it reads IIAALAVSRVGLLWVILLHWY. Topologically, residues 68 to 79 are extracellular; sequence STVLNPTSSNLK. Residues 80–100 traverse the membrane as a helical segment; the sequence is VTIFISNAWAVTNHFSIWLAA. The Cytoplasmic segment spans residues 101-125; sequence SLSIFYLLKIVNFSRLIFHHLKRKA. Residues 126–146 traverse the membrane as a helical segment; that stretch reads KSVVLVIVLGSLFFLVCHLVM. Over 147–178 the chain is Extracellular; that stretch reads KSTYINVWTEEYEGNVTWKIKLRNAMHLSNLT. Asn-161 and Asn-176 each carry an N-linked (GlcNAc...) asparagine glycan. The helical transmembrane segment at 179-199 threads the bilayer; it reads VAMLANLIPFTLTLISFLLLI. Residues 200 to 229 lie on the Cytoplasmic side of the membrane; that stretch reads YSLCKHLKKMQLHGKGSQDPSTKIHIKALQ. A helical transmembrane segment spans residues 230 to 250; the sequence is TVTSFLILLAIYFLCLITSFW. At 251 to 259 the chain is on the extracellular side; the sequence is NSKMRPKEI. The chain crosses the membrane as a helical span at residues 260 to 280; that stretch reads VLMLCQAFGIIYPSFHSFILI. The Cytoplasmic segment spans residues 281-309; the sequence is WGNKTLKQTFLSVLWRVTCWAKGQNQSTP.

Belongs to the G-protein coupled receptor T2R family.

It is found in the membrane. Receptor that may play a role in the perception of bitterness and is gustducin-linked. May play a role in sensing the chemical composition of the gastrointestinal content. The activity of this receptor may stimulate alpha gustducin, mediate PLC-beta-2 activation and lead to the gating of TRPM5. The sequence is that of Taste receptor type 2 member 20 (TAS2R20) from Gorilla gorilla gorilla (Western lowland gorilla).